The following is a 261-amino-acid chain: Flagellar L-ring protein (261 aa).

The N-terminal stretch at 1-18 is a signal peptide; it reads MAAMKRLLASSLLILLSG. C19 carries N-palmitoyl cysteine lipidation. C19 is lipidated: S-diacylglycerol cysteine. The disordered stretch occupies residues 37–67; the sequence is TVDAVEGDKSESNSGLTDALRNRTDPVAGDP.

This sequence belongs to the FlgH family. As to quaternary structure, the basal body constitutes a major portion of the flagellar organelle and consists of four rings (L,P,S, and M) mounted on a central rod.

It localises to the cell outer membrane. The protein resides in the bacterial flagellum basal body. Its function is as follows. Assembles around the rod to form the L-ring and probably protects the motor/basal body from shearing forces during rotation. The chain is Flagellar L-ring protein from Vibrio cholerae serotype O1 (strain ATCC 39541 / Classical Ogawa 395 / O395).